The following is an 804-amino-acid chain: Enhancer of polycomb homolog 2 (804 aa).

Disordered stretches follow at residues 372–398 (QSSD…PDGS), 484–507 (GFSS…SDRH), 602–623 (QQSQ…KSDC), and 642–669 (NSPT…VQPS). The span at 602 to 611 (QQSQQSLQQS) shows a compositional bias: low complexity. Polar residues predominate over residues 654-669 (DQNAGHSNLNGVVQPS).

The protein belongs to the enhancer of polycomb family.

It is found in the nucleus. Functionally, may play a role in transcription or DNA repair. The sequence is that of Enhancer of polycomb homolog 2 (epc2) from Xenopus tropicalis (Western clawed frog).